Consider the following 186-residue polypeptide: CASP-like protein ARALYDRAFT_316979 (186 aa).

Over 1-23 (MRRNGDGEEVVAKRRRRIKELVQ) the chain is Cytoplasmic. Residues 24 to 44 (VALRGGCLAASATAMAVMLTA) form a helical membrane-spanning segment. Topologically, residues 45 to 70 (TEEGVADIYGFKLTLSSNWSFSPSYQ) are extracellular. N62 carries N-linked (GlcNAc...) asparagine glycosylation. A helical membrane pass occupies residues 71 to 91 (YVVGACTGTVLYSLFQLCLGV). Topologically, residues 92–115 (YRLLTGSPITPSRFQAWLCFTSDQ) are cytoplasmic. The helical transmembrane segment at 116–132 (LFGYLMMSAGSAGSGVT) threads the bilayer. The Extracellular segment spans residues 133 to 161 (NLNKTGIRHTPLPDFCKTLSSFCNHVALS). N135 carries N-linked (GlcNAc...) asparagine glycosylation. The chain crosses the membrane as a helical span at residues 162–182 (LLLVFLSFIFLASSSFFTVLV). At 183–186 (LSTP) the chain is on the cytoplasmic side.

It belongs to the Casparian strip membrane proteins (CASP) family. As to quaternary structure, homodimer and heterodimers.

The protein localises to the cell membrane. The polypeptide is CASP-like protein ARALYDRAFT_316979 (Arabidopsis lyrata subsp. lyrata (Lyre-leaved rock-cress)).